The primary structure comprises 1850 residues: Voltage-dependent L-type calcium channel subunit alpha-1S (1850 aa).

Residues methionine 1–isoleucine 23 form a disordered region. Residues methionine 1–lysine 51 are Cytoplasmic-facing. One copy of the I repeat lies at asparagine 38–phenylalanine 337. A helical membrane pass occupies residues proline 52 to valine 70. Residues tyrosine 71–glycine 85 are Extracellular-facing. A helical membrane pass occupies residues leucine 86–isoleucine 106. Topologically, residues alanine 107–aspartate 115 are cytoplasmic. A helical transmembrane segment spans residues alanine 116 to threonine 136. Residues alanine 137–aspartate 160 are Extracellular-facing. The chain crosses the membrane as a helical span at residues valine 161–valine 179. Residues proline 180–leucine 196 are Cytoplasmic-facing. Residues phenylalanine 197–phenylalanine 218 traverse the membrane as a helical segment. Over lysine 219–glycine 279 the chain is Extracellular. 2 disulfides stabilise this stretch: cysteine 226/cysteine 254 and cysteine 245/cysteine 261. The pore-forming intramembrane region spans phenylalanine 280–valine 301. The Selectivity filter of repeat I signature appears at serine 290–glycine 293. A Ca(2+)-binding site is contributed by glutamate 292. At asparagine 302–tryptophan 309 the chain is on the extracellular side. Residues proline 310 to leucine 330 traverse the membrane as a helical segment. Over glycine 331 to lysine 432 the chain is Cytoplasmic. Positions glutamine 357–glutamate 374 are binding to the beta subunit. Phosphoserine occurs at positions 393 and 397. An II repeat occupies asparagine 418–leucine 664. A helical membrane pass occupies residues valine 433–serine 451. Residues glutamate 452 to histidine 462 are Extracellular-facing. The chain crosses the membrane as a helical span at residues leucine 463–methionine 483. Residues tyrosine 484–serine 494 lie on the Cytoplasmic side of the membrane. The chain crosses the membrane as a helical span at residues isoleucine 495–valine 514. Residues glutamate 515–glycine 523 lie on the Extracellular side of the membrane. The helical transmembrane segment at isoleucine 524–tryptophan 542 threads the bilayer. Topologically, residues threonine 543 to serine 561 are cytoplasmic. A helical membrane pass occupies residues leucine 562–phenylalanine 581. Residues glycine 582 to proline 601 are Extracellular-facing. An intramembrane region (pore-forming) is located at residues glutamine 602 to glycine 623. The short motif at threonine 612–aspartate 615 is the Selectivity filter of repeat II element. Residue glutamate 614 participates in Ca(2+) binding. At isoleucine 624 to proline 633 the chain is on the extracellular side. Residues glycine 634–leucine 653 traverse the membrane as a helical segment. At asparagine 654–threonine 799 the chain is on the cytoplasmic side. 2 disordered regions span residues alanine 673–threonine 717 and glutamate 731–proline 758. The residue at position 687 (serine 687) is a Phosphoserine; by PKA. Residues leucine 690–glycine 711 are compositionally biased toward basic and acidic residues. Positions proline 742–glutamate 751 are enriched in acidic residues. Residues asparagine 786–phenylalanine 1068 form an III repeat. The chain crosses the membrane as a helical span at residues tryptophan 800–alanine 818. Residues glutamate 819–glutamine 830 are Extracellular-facing. A helical membrane pass occupies residues isoleucine 831 to lysine 850. The Cytoplasmic segment spans residues methionine 851–asparagine 866. The chain crosses the membrane as a helical span at residues tyrosine 867–leucine 885. The Extracellular segment spans residues glutamate 886–valine 892. The chain crosses the membrane as a helical span at residues valine 893–alanine 911. Residues lysine 912–asparagine 930 are Cytoplasmic-facing. The chain crosses the membrane as a helical span at residues isoleucine 931 to phenylalanine 950. Over lysine 951–valine 1000 the chain is Extracellular. A disulfide bridge links cysteine 957 with cysteine 968. A dihydropyridine binding region spans residues arginine 988–lysine 1077. Residues leucine 1001–tyrosine 1021 constitute an intramembrane region (pore-forming). Residues threonine 1012 to glycine 1015 carry the Selectivity filter of repeat III motif. Glutamate 1014 serves as a coordination point for Ca(2+). Residues lysine 1022–arginine 1038 lie on the Extracellular side of the membrane. The helical transmembrane segment at valine 1039–phenylalanine 1060 threads the bilayer. Residues valine 1061–serine 1118 are Cytoplasmic-facing. One copy of the IV repeat lies at asparagine 1105–phenylalanine 1384. The chain crosses the membrane as a helical span at residues tyrosine 1119–tyrosine 1140. Asparagine 1141 is a glycosylation site (N-linked (GlcNAc...) asparagine). Over asparagine 1141–histidine 1148 the chain is Extracellular. Residues isoleucine 1149–isoleucine 1170 form a helical membrane-spanning segment. Residues alanine 1171–aspartate 1180 are Cytoplasmic-facing. The chain crosses the membrane as a helical span at residues proline 1181–serine 1200. The Extracellular segment spans residues glutamate 1201–serine 1231. A helical transmembrane segment spans residues serine 1232–alanine 1250. Residues glutamate 1251 to proline 1268 are Cytoplasmic-facing. The helical transmembrane segment at tyrosine 1269–phenylalanine 1289 threads the bilayer. Residues glycine 1290–glutamine 1311 lie on the Extracellular side of the membrane. Residues alanine 1312–leucine 1330 constitute an intramembrane region (pore-forming). The Selectivity filter of repeat IV motif lies at threonine 1321–alanine 1324. Residues alanine 1331–phenylalanine 1356 are Extracellular-facing. The tract at residues arginine 1337–lysine 1403 is dihydropyridine binding. Cysteines 1338 and 1352 form a disulfide. Residues glutamate 1349–tryptophan 1391 form a phenylalkylamine binding region. A helical membrane pass occupies residues alanine 1357–methionine 1381. At aspartate 1382–proline 1850 the chain is on the cytoplasmic side. The segment at lysine 1522–glutamate 1542 is interaction with calmodulin. Residue serine 1575 is modified to Phosphoserine; by PKA and CAMK2. Threonine 1579 carries the phosphothreonine modification. Phosphoserine; by PKA is present on serine 1617. The disordered stretch occupies residues proline 1697–alanine 1779. Over residues glutamine 1706–arginine 1716 the composition is skewed to polar residues. 2 stretches are compositionally biased toward basic and acidic residues: residues serine 1717–methionine 1726 and glutamine 1745–glycine 1756.

Belongs to the calcium channel alpha-1 subunit (TC 1.A.1.11) family. CACNA1S subfamily. Component of a calcium channel complex consisting of a pore-forming alpha subunit (CACNA1S) and the ancillary subunits CACNB1 or CACNB2, CACNG1 and CACNA2D1. The channel complex contains alpha, beta, gamma and delta subunits in a 1:1:1:1 ratio, i.e. it contains either CACNB1 or CACNB2. CACNA1S channel activity is modulated by the auxiliary subunits (CACNB1 or CACNB2, CACNG1 and CACNA2D1). Interacts with DYSF and JSRP1. Interacts with RYR1. Interacts with STAC, STAC2 and STAC3 (via their SH3 domains). Interacts with CALM. In terms of processing, the alpha-1S subunit is found in two isoforms in the skeletal muscle: a minor form of 212 kDa containing the complete amino acid sequence, and a major form of 190 kDa derived from the full-length form by post-translational proteolysis close to Phe-1690. Post-translationally, phosphorylated. Phosphorylation by PKA activates the calcium channel. Both the minor and major forms are phosphorylated in vitro by PKA. Phosphorylation at Ser-1575 is involved in beta-adrenergic-mediated regulation of the channel. In terms of tissue distribution, skeletal muscle specific.

The protein localises to the cell membrane. It is found in the sarcolemma. It localises to the T-tubule. It carries out the reaction Ca(2+)(in) = Ca(2+)(out). With respect to regulation, channel activity is blocked by dihydropyridines (DHP), phenylalkylamines, and by benzothiazepines. Its function is as follows. Pore-forming, alpha-1S subunit of the voltage-gated calcium channel that gives rise to L-type calcium currents in skeletal muscle. Calcium channels containing the alpha-1S subunit play an important role in excitation-contraction coupling in skeletal muscle via their interaction with RYR1, which triggers Ca(2+) release from the sarcplasmic reticulum and ultimately results in muscle contraction. Long-lasting (L-type) calcium channels belong to the 'high-voltage activated' (HVA) group. The protein is Voltage-dependent L-type calcium channel subunit alpha-1S (Cacna1s) of Rattus norvegicus (Rat).